The sequence spans 87 residues: Small ribosomal subunit protein bS16 (87 aa).

The protein belongs to the bacterial ribosomal protein bS16 family.

The protein is Small ribosomal subunit protein bS16 of Ehrlichia ruminantium (strain Gardel).